Reading from the N-terminus, the 154-residue chain is L-alanine exporter AlaE (154 aa).

The next 4 membrane-spanning stretches (helical) occupy residues 21–41, 51–71, 90–110, and 115–135; these read FAMV…LSGM, LVAI…RDFF, ILAY…VIGA, and IVAA…VYGY.

It belongs to the AlaE exporter family.

It localises to the cell inner membrane. In terms of biological role, exports L-alanine. This chain is L-alanine exporter AlaE, found in Escherichia fergusonii (strain ATCC 35469 / DSM 13698 / CCUG 18766 / IAM 14443 / JCM 21226 / LMG 7866 / NBRC 102419 / NCTC 12128 / CDC 0568-73).